Reading from the N-terminus, the 154-residue chain is Ribosome maturation factor RimP (154 aa).

The protein belongs to the RimP family.

Its subcellular location is the cytoplasm. Functionally, required for maturation of 30S ribosomal subunits. The polypeptide is Ribosome maturation factor RimP (Acetivibrio thermocellus (strain ATCC 27405 / DSM 1237 / JCM 9322 / NBRC 103400 / NCIMB 10682 / NRRL B-4536 / VPI 7372) (Clostridium thermocellum)).